Here is a 57-residue protein sequence, read N- to C-terminus: Protein GnsB (57 aa).

This sequence belongs to the gns family.

Functionally, overexpression increases levels of unsaturated fatty acids and suppresses both the temperature-sensitive fabA6 mutation and cold-sensitive secG null mutation. This chain is Protein GnsB (gnsB), found in Escherichia coli (strain K12).